The chain runs to 157 residues: Small ribosomal subunit protein uS7 (157 aa).

Belongs to the universal ribosomal protein uS7 family. Part of the 30S ribosomal subunit. Contacts proteins S9 and S11.

Its function is as follows. One of the primary rRNA binding proteins, it binds directly to 16S rRNA where it nucleates assembly of the head domain of the 30S subunit. Is located at the subunit interface close to the decoding center, probably blocks exit of the E-site tRNA. This chain is Small ribosomal subunit protein uS7, found in Leptospira interrogans serogroup Icterohaemorrhagiae serovar copenhageni (strain Fiocruz L1-130).